A 207-amino-acid chain; its full sequence is Uracil phosphoribosyltransferase (207 aa).

5-phospho-alpha-D-ribose 1-diphosphate contacts are provided by residues Arg-77, Arg-102, and 129–137 (DPMLATGGS). Residues Ile-192 and 197–199 (GDA) contribute to the uracil site. Asp-198 serves as a coordination point for 5-phospho-alpha-D-ribose 1-diphosphate.

This sequence belongs to the UPRTase family. It depends on Mg(2+) as a cofactor.

The enzyme catalyses UMP + diphosphate = 5-phospho-alpha-D-ribose 1-diphosphate + uracil. It participates in pyrimidine metabolism; UMP biosynthesis via salvage pathway; UMP from uracil: step 1/1. With respect to regulation, allosterically activated by GTP. Its function is as follows. Catalyzes the conversion of uracil and 5-phospho-alpha-D-ribose 1-diphosphate (PRPP) to UMP and diphosphate. The protein is Uracil phosphoribosyltransferase of Mycoplasma mycoides subsp. mycoides SC (strain CCUG 32753 / NCTC 10114 / PG1).